Here is an 87-residue protein sequence, read N- to C-terminus: MSVKEESFEKALARLERIAVALEAGDVPLEKGVALYKEGMGLVASCRKRLEAARLEISLAGEDGAVVPFDVADDEAARDGGPAGEES.

The protein belongs to the XseB family. In terms of assembly, heterooligomer composed of large and small subunits.

It localises to the cytoplasm. It carries out the reaction Exonucleolytic cleavage in either 5'- to 3'- or 3'- to 5'-direction to yield nucleoside 5'-phosphates.. In terms of biological role, bidirectionally degrades single-stranded DNA into large acid-insoluble oligonucleotides, which are then degraded further into small acid-soluble oligonucleotides. In Solidesulfovibrio magneticus (strain ATCC 700980 / DSM 13731 / RS-1) (Desulfovibrio magneticus), this protein is Exodeoxyribonuclease 7 small subunit.